The primary structure comprises 482 residues: Cilia- and flagella-associated protein 53 (482 aa).

3 coiled-coil regions span residues 9 to 40 (DARIQKMRELEERLANLKADRKVEQKMVAVAE), 67 to 124 (ADLN…QALA), and 152 to 413 (IEER…AKDA). A disordered region spans residues 462-482 (VNQTLSSTDPPVWHGRRKFDW).

Belongs to the CFAP53 family.

It is found in the cell projection. It localises to the cilium. The protein localises to the flagellum. In terms of biological role, may play a role in filopodium movement. The protein is Cilia- and flagella-associated protein 53 of Chlamydomonas reinhardtii (Chlamydomonas smithii).